We begin with the raw amino-acid sequence, 262 residues long: Pyridoxine 5'-phosphate synthase (262 aa).

Asn6 lines the 3-amino-2-oxopropyl phosphate pocket. 8–9 lines the 1-deoxy-D-xylulose 5-phosphate pocket; that stretch reads DH. Arg17 provides a ligand contact to 3-amino-2-oxopropyl phosphate. Residue His42 is the Proton acceptor of the active site. 1-deoxy-D-xylulose 5-phosphate-binding residues include Arg44 and His49. Residue Glu69 is the Proton acceptor of the active site. 1-deoxy-D-xylulose 5-phosphate is bound at residue Thr99. The Proton donor role is filled by His213. 3-amino-2-oxopropyl phosphate-binding positions include Gly214 and 235–236; that span reads GH.

This sequence belongs to the PNP synthase family. In terms of assembly, homooctamer; tetramer of dimers.

The protein resides in the cytoplasm. It catalyses the reaction 3-amino-2-oxopropyl phosphate + 1-deoxy-D-xylulose 5-phosphate = pyridoxine 5'-phosphate + phosphate + 2 H2O + H(+). It functions in the pathway cofactor biosynthesis; pyridoxine 5'-phosphate biosynthesis; pyridoxine 5'-phosphate from D-erythrose 4-phosphate: step 5/5. Catalyzes the complicated ring closure reaction between the two acyclic compounds 1-deoxy-D-xylulose-5-phosphate (DXP) and 3-amino-2-oxopropyl phosphate (1-amino-acetone-3-phosphate or AAP) to form pyridoxine 5'-phosphate (PNP) and inorganic phosphate. The sequence is that of Pyridoxine 5'-phosphate synthase from Wolinella succinogenes (strain ATCC 29543 / DSM 1740 / CCUG 13145 / JCM 31913 / LMG 7466 / NCTC 11488 / FDC 602W) (Vibrio succinogenes).